Reading from the N-terminus, the 189-residue chain is GMP synthase [glutamine-hydrolyzing] subunit A (189 aa).

The region spanning 5–189 (KILVVNNYGQ…TNFLEICEKY (185 aa)) is the Glutamine amidotransferase type-1 domain. Catalysis depends on C79, which acts as the Nucleophile. Active-site residues include H166 and E168.

In terms of assembly, heterodimer composed of a glutamine amidotransferase subunit (A) and a GMP-binding subunit (B).

The catalysed reaction is XMP + L-glutamine + ATP + H2O = GMP + L-glutamate + AMP + diphosphate + 2 H(+). It functions in the pathway purine metabolism; GMP biosynthesis; GMP from XMP (L-Gln route): step 1/1. Functionally, catalyzes the synthesis of GMP from XMP. The chain is GMP synthase [glutamine-hydrolyzing] subunit A from Methanosarcina barkeri (strain Fusaro / DSM 804).